The primary structure comprises 55 residues: Small ribosomal subunit protein bS21 (55 aa).

Belongs to the bacterial ribosomal protein bS21 family.

This Ureaplasma parvum serovar 3 (strain ATCC 27815 / 27 / NCTC 11736) protein is Small ribosomal subunit protein bS21.